Here is an 89-residue protein sequence, read N- to C-terminus: Small ribosomal subunit protein uS14 (89 aa).

The protein belongs to the universal ribosomal protein uS14 family. As to quaternary structure, part of the 30S ribosomal subunit. Contacts proteins S3 and S10.

In terms of biological role, binds 16S rRNA, required for the assembly of 30S particles and may also be responsible for determining the conformation of the 16S rRNA at the A site. This Leuconostoc citreum (strain KM20) protein is Small ribosomal subunit protein uS14.